The following is a 549-amino-acid chain: Myotubularin-related protein 9 (549 aa).

Met1 carries the post-translational modification N-acetylmethionine. The 96-residue stretch at 4-99 (AELIKTPRVD…LNIASSIEAL (96 aa)) folds into the GRAM domain. The Myotubularin phosphatase domain occupies 123-498 (GWHSFLPEQE…QSLPLWEGIF (376 aa)). Residues 508–542 (LDEAYEEMVNIIEYNKELQAKVNILRRQLAELETE) adopt a coiled-coil conformation. Ser548 is subject to Phosphoserine.

It belongs to the protein-tyrosine phosphatase family. Non-receptor class myotubularin subfamily. Homodimer. Heterodimer (via C-terminus) with lipid phosphatase MTMR6 (via C-terminus). Heterodimer (via coiled coil domain) with lipid phosphatase MTMR7 (via C-terminus). Heterodimer with lipid phosphatase MTMR8. As to expression, expressed in many tissues.

It localises to the cytoplasm. The protein localises to the cell projection. It is found in the ruffle membrane. The protein resides in the perinuclear region. Its subcellular location is the endoplasmic reticulum. Acts as an adapter for myotubularin-related phosphatases. Increases lipid phosphatase MTMR6 catalytic activity, specifically towards phosphatidylinositol 3,5-bisphosphate and MTMR6 binding affinity for phosphorylated phosphatidylinositols. Positively regulates lipid phosphatase MTMR7 catalytic activity. Increases MTMR8 catalytic activity towards phosphatidylinositol 3-phosphate. The formation of the MTMR6-MTMR9 complex, stabilizes both MTMR6 and MTMR9 protein levels. Stabilizes MTMR8 protein levels. Plays a role in the late stages of macropinocytosis possibly by regulating MTMR6-mediated dephosphorylation of phosphatidylinositol 3-phosphate in membrane ruffles. Negatively regulates autophagy, in part via its association with MTMR8. Negatively regulates DNA damage-induced apoptosis, in part via its association with MTMR6. Does not bind mono-, di- and tri-phosphorylated phosphatidylinositols, phosphatidic acid and phosphatidylserine. The protein is Myotubularin-related protein 9 (MTMR9) of Homo sapiens (Human).